The following is a 187-amino-acid chain: MKNDQRRLRDRVAVFACIAIAAIAIDQLTKMWALSALADGRTIRVIPGLLSLTLVRNPGASLGMGSGMTWLISLLAMAACVALVVLAVRTISMKWTVLFAFAFAGAFGNLIDRVIYAEGFLNGKVVDFLNYGWSIGNVADIFLMLAGVAAVLLLFLGEPFSQKDLDEANGKTLGDDANATDDGAKAA.

Helical transmembrane passes span Val12–Trp32, Met68–Val88, and Ile91–Ile111. Residues Asp127 and Asp140 contribute to the active site. A helical transmembrane segment spans residues Ile141–Ser161. The disordered stretch occupies residues Glu167–Ala187.

This sequence belongs to the peptidase A8 family.

The protein localises to the cell membrane. The catalysed reaction is Release of signal peptides from bacterial membrane prolipoproteins. Hydrolyzes -Xaa-Yaa-Zaa-|-(S,diacylglyceryl)Cys-, in which Xaa is hydrophobic (preferably Leu), and Yaa (Ala or Ser) and Zaa (Gly or Ala) have small, neutral side chains.. The protein operates within protein modification; lipoprotein biosynthesis (signal peptide cleavage). Functionally, this protein specifically catalyzes the removal of signal peptides from prolipoproteins. The sequence is that of Lipoprotein signal peptidase from Bifidobacterium adolescentis (strain ATCC 15703 / DSM 20083 / NCTC 11814 / E194a).